We begin with the raw amino-acid sequence, 479 residues long: Glycogen synthase (479 aa).

Lys15 lines the ADP-alpha-D-glucose pocket.

It belongs to the glycosyltransferase 1 family. Bacterial/plant glycogen synthase subfamily.

The catalysed reaction is [(1-&gt;4)-alpha-D-glucosyl](n) + ADP-alpha-D-glucose = [(1-&gt;4)-alpha-D-glucosyl](n+1) + ADP + H(+). Its pathway is glycan biosynthesis; glycogen biosynthesis. Synthesizes alpha-1,4-glucan chains using ADP-glucose. The polypeptide is Glycogen synthase (Nostoc punctiforme (strain ATCC 29133 / PCC 73102)).